Here is a 109-residue protein sequence, read N- to C-terminus: Glutaredoxin-C13 (109 aa).

The Glutaredoxin domain occupies 2–108; sequence AEMVARLASE…PMLKNAGALW (107 aa). Cys22 and Cys25 are joined by a disulfide. Positions 106–109 match the Responsive for interaction with TGA factors motif; that stretch reads ALWL.

The protein belongs to the glutaredoxin family. CC-type subfamily.

It localises to the cytoplasm. It is found in the nucleus. Its function is as follows. Has a glutathione-disulfide oxidoreductase activity in the presence of NADPH and glutathione reductase. Reduces low molecular weight disulfides and proteins. This chain is Glutaredoxin-C13 (GRXC13), found in Oryza sativa subsp. japonica (Rice).